A 228-amino-acid chain; its full sequence is Latherin (228 aa).

The signal sequence occupies residues 1-20; it reads MLKVSCLFVLLCGLLVPSSA. A disulfide bridge connects residues C153 and C196.

It belongs to the BPI/LBP/Plunc superfamily. Plunc family. As to quaternary structure, monomer. In terms of processing, no sign of N-X-[ST] acceptor site even though reported as N-glycosylated. In terms of tissue distribution, found in sweat (at protein level).

Its subcellular location is the secreted. Functionally, major protein in sweat, has surfactant properties. Has a role in temperature regulation by having a capacity to make hydrophobic surfaces wettable and so can function in promoting spreading and evaporation of sweat. The sequence is that of Latherin (LATH) from Equus caballus (Horse).